Reading from the N-terminus, the 255-residue chain is DNA repair protein RecO (255 aa).

It belongs to the RecO family.

Its function is as follows. Involved in DNA repair and RecF pathway recombination. This chain is DNA repair protein RecO, found in Acidithiobacillus ferrooxidans (strain ATCC 23270 / DSM 14882 / CIP 104768 / NCIMB 8455) (Ferrobacillus ferrooxidans (strain ATCC 23270)).